The sequence spans 598 residues: Glutamine--fructose-6-phosphate aminotransferase [isomerizing] (598 aa).

Catalysis depends on Cys-2, which acts as the Nucleophile; for GATase activity. The Glutamine amidotransferase type-2 domain maps to 2 to 219 (CGIIGYIGPR…DGEYGIVSKD (218 aa)). 2 consecutive SIS domains span residues 280–420 (VAEL…LVGI) and 449–588 (IAVK…PDRP). The active-site For Fru-6P isomerization activity is the Lys-593.

Homodimer.

The protein localises to the cytoplasm. It catalyses the reaction D-fructose 6-phosphate + L-glutamine = D-glucosamine 6-phosphate + L-glutamate. Catalyzes the first step in hexosamine metabolism, converting fructose-6P into glucosamine-6P using glutamine as a nitrogen source. The sequence is that of Glutamine--fructose-6-phosphate aminotransferase [isomerizing] from Pyrococcus horikoshii (strain ATCC 700860 / DSM 12428 / JCM 9974 / NBRC 100139 / OT-3).